Here is a 101-residue protein sequence, read N- to C-terminus: MDIKILKDKNNSLLNRRELDFVVKYEGSTPSRSDVRNKLAAMLNAPLELLIIQRIKTEYGMQESKGYAKVYADEARMKQVEQEYILKRNPAPGAEAEEEEA.

This sequence belongs to the eukaryotic ribosomal protein eS24 family.

This is Small ribosomal subunit protein eS24 from Methanosarcina acetivorans (strain ATCC 35395 / DSM 2834 / JCM 12185 / C2A).